We begin with the raw amino-acid sequence, 1185 residues long: 205 kDa microtubule-associated protein (1185 aa).

Residues 146 to 159 (EPNQLPEQLQQQQQ) show a composition bias toward low complexity. The interval 146–196 (EPNQLPEQLQQQQQIESQGVHEDPRQEDEDEHSSVATTYGTSSLSENNSSP) is disordered. Positions 179–196 (SVATTYGTSSLSENNSSP) are enriched in polar residues. A phosphoserine mark is found at S354 and S448. Position 450 is a phosphotyrosine (Y450). S709, S710, and S712 each carry phosphoserine. At T721 the chain carries Phosphothreonine. Position 728 is a phosphoserine (S728). The segment at 745–977 (TAADGQSISQ…ASTKVRPAAT (233 aa)) is microtubule-binding. Over residues 856–866 (SIATKTSTTSS) the composition is skewed to low complexity. Disordered stretches follow at residues 856-1035 (SIAT…TSTA) and 1054-1114 (SASL…SSPA). Polar residues-rich tracts occupy residues 867 to 881 (LTGN…NVGS) and 908 to 936 (TITN…STNA). S874 carries the post-translational modification Phosphoserine. Residues 940-952 (ATSGTGSVASSTA) show a composition bias toward low complexity. Residues 989–999 (PRSTISSTTTV) show a composition bias toward polar residues. Positions 1003–1015 (PSTSTPSFSTRSP) are enriched in low complexity. Polar residues-rich tracts occupy residues 1016–1026 (NKQQSNGLGKN) and 1054–1066 (SASL…STSR). 2 positions are modified to phosphoserine: S1075 and S1086. The segment covering 1100–1111 (LTPQSKDGTAKS) has biased composition (polar residues). A Phosphoserine modification is found at S1121.

It localises to the cytoplasm. Its subcellular location is the cytoskeleton. The protein resides in the spindle. Functionally, may play an important role in the regulation of microtubule assembly and interaction. The chain is 205 kDa microtubule-associated protein (Map205) from Drosophila melanogaster (Fruit fly).